A 514-amino-acid polypeptide reads, in one-letter code: Endoglucanase MaCel5A (514 aa).

An N-terminal signal peptide occupies residues Met1–Ala23. Low complexity-rich tracts occupy residues Gly91–Gly114 and Ser179–Gly201. 2 disordered regions span residues Gly91–Gly118 and Ser179–Ser208. Glu346 serves as the catalytic Proton donor. Catalysis depends on Glu439, which acts as the Nucleophile.

This sequence belongs to the glycosyl hydrolase 5 (cellulase A) family.

The enzyme catalyses Endohydrolysis of (1-&gt;4)-beta-D-glucosidic linkages in cellulose, lichenin and cereal beta-D-glucans.. Its activity is regulated as follows. Exhibits strong halostability and halotolerance. The activity increases about tenfold in the presence of 0.5 M NaCl, and about fivefold in the presence of 4.0 M NaCl. Tolerates detergents, but activity is decreased in the presence of EDTA. Activity is enhanced in the presence of Mn(2+), Ca(2+), Ba(2+) or Mg(2+), and decreased in the presence of Zn(2+), Cu(2+), Al(3+) or Fe(3+). In terms of biological role, endoglucanase that exhibits highest activity toward barley beta-glucan, lower activity toward carboxymethyl cellulose (CMC-Na), and marginal activity toward laminarin and xylan. This chain is Endoglucanase MaCel5A, found in Microbulbifer sp. (strain ALW1).